The sequence spans 172 residues: Translation initiation factor IF-3 (172 aa).

Belongs to the IF-3 family. Monomer.

It localises to the cytoplasm. Functionally, IF-3 binds to the 30S ribosomal subunit and shifts the equilibrium between 70S ribosomes and their 50S and 30S subunits in favor of the free subunits, thus enhancing the availability of 30S subunits on which protein synthesis initiation begins. The sequence is that of Translation initiation factor IF-3 from Campylobacter curvus (strain 525.92).